A 64-amino-acid polypeptide reads, in one-letter code: Conotoxin Ts-011 (64 aa).

The first 22 residues, 1–22 (MHCLPVLVILLLLIASTPSVDA), serve as a signal peptide directing secretion. Residues 23-52 (RPKTKDDVPPASFHGADDANRILQTLWNLR) constitute a propeptide that is removed on maturation. The residue at position 63 (Ile63) is an Isoleucine amide.

This sequence belongs to the conotoxin T superfamily. In terms of processing, contains 2 disulfide bonds that can be either 'C1-C3, C2-C4' or 'C1-C4, C2-C3', since these disulfide connectivities have been observed for conotoxins with cysteine framework V (for examples, see AC P0DQQ7 and AC P81755). In terms of tissue distribution, expressed by the venom duct.

It is found in the secreted. This chain is Conotoxin Ts-011, found in Conus tessulatus (Tessellate cone).